A 255-amino-acid chain; its full sequence is DASH complex subunit SPC34 (255 aa).

The interval 53 to 81 (LFSVPPPPPRQTTLTAEQQQQQKPSNRRQ) is disordered. Over residues 63 to 81 (QTTLTAEQQQQQKPSNRRQ) the composition is skewed to polar residues. Residues 176–248 (LAYYEAKIAE…QARLRALDAD (73 aa)) adopt a coiled-coil conformation.

It belongs to the DASH complex SPC34 family. As to quaternary structure, component of the DASH complex consisting of ASK1, DAD1, DAD2, DAD3, DAD4, DAM1, DUO1, HSK3, SPC19 and SPC34, with a stoichiometry of one copy of each subunit per complex. Multiple DASH complexes oligomerize to form a ring that encircles spindle microtubules and organizes the rod-like NDC80 complexes of the outer kinetochore of the outer kinetochore. DASH complex oligomerization strengthens microtubule attachments. On cytoplasmic microtubules, DASH complexes appear to form patches instead of rings.

The protein resides in the nucleus. Its subcellular location is the cytoplasm. It localises to the cytoskeleton. The protein localises to the spindle. It is found in the chromosome. The protein resides in the centromere. Its subcellular location is the kinetochore. In terms of biological role, component of the DASH complex that connects microtubules with kinetochores and couples microtubule depolymerisation to chromosome movement; it is involved in retrieving kinetochores to the spindle poles before their re-orientation on the spindle in early mitosis and allows microtubule depolymerization to pull chromosomes apart and resist detachment during anaphase. Kinetochores, consisting of a centromere-associated inner segment and a microtubule-contacting outer segment, play a crucial role in chromosome segregation by mediating the physical connection between centromeric DNA and microtubules. Kinetochores also serve as an input point for the spindle assembly checkpoint, which delays anaphase until all chromosomes have bioriented on the mitotic spindle. This Chaetomium thermophilum (strain DSM 1495 / CBS 144.50 / IMI 039719) (Thermochaetoides thermophila) protein is DASH complex subunit SPC34.